The sequence spans 62 residues: Potassium channel toxin alpha-KTx 22.1 (62 aa).

The signal sequence occupies residues 1–18 (MQKLFIVFVLFCILRLDA). 3 disulfide bridges follow: Cys-28-Cys-46, Cys-33-Cys-59, and Cys-37-Cys-61.

This sequence belongs to the short scorpion toxin superfamily. Potassium channel inhibitor family. Alpha-KTx 22 subfamily. In terms of tissue distribution, expressed by the venom gland.

The protein localises to the secreted. Its function is as follows. May block potassium channels. This is Potassium channel toxin alpha-KTx 22.1 from Olivierus martensii (Manchurian scorpion).